The sequence spans 448 residues: Mitochondrial distribution and morphology protein 10 (448 aa).

Belongs to the MDM10 family. Component of the ER-mitochondria encounter structure (ERMES) or MDM complex, composed of MMM1, MDM10, MDM12 and MDM34. Associates with the mitochondrial outer membrane sorting assembly machinery SAM(core) complex.

The protein localises to the mitochondrion outer membrane. In terms of biological role, component of the ERMES/MDM complex, which serves as a molecular tether to connect the endoplasmic reticulum and mitochondria. Components of this complex are involved in the control of mitochondrial shape and protein biogenesis and may function in phospholipid exchange. MDM10 is involved in the late assembly steps of the general translocase of the mitochondrial outer membrane (TOM complex). Functions in the TOM40-specific route of the assembly of outer membrane beta-barrel proteins, including the association of TOM40 with the receptor TOM22 and small TOM proteins. Can associate with the SAM(core) complex as well as the MDM12-MMM1 complex, both involved in late steps of the major beta-barrel assembly pathway, that is responsible for biogenesis of all outer membrane beta-barrel proteins. May act as a switch that shuttles between both complexes and channels precursor proteins into the TOM40-specific pathway. Plays a role in mitochondrial morphology and in the inheritance of mitochondria. The protein is Mitochondrial distribution and morphology protein 10 of Podospora anserina (strain S / ATCC MYA-4624 / DSM 980 / FGSC 10383) (Pleurage anserina).